A 642-amino-acid chain; its full sequence is Probable serine/threonine-protein kinase drkA (642 aa).

The first 23 residues, 1–23 (MKKLPFLIIIIYIFLILISISSS), serve as a signal peptide directing secretion. Topologically, residues 24 to 322 (IDYNYNNDID…KPTISLLKKY (299 aa)) are extracellular. Low complexity predominate over residues 106 to 128 (SENSGSGSNSNSNSKNTDSSTGP). The interval 106-136 (SENSGSGSNSNSNSKNTDSSTGPTPSPISIN) is disordered. Residues N136, N140, N158, N244, and N271 are each glycosylated (N-linked (GlcNAc...) asparagine). The chain crosses the membrane as a helical span at residues 323–343 (LIIGFSIVGGLLIIGGCFLLI). Residues 344-642 (RNRYRSSGYY…SDLQYVRQQL (299 aa)) are Cytoplasmic-facing. The region spanning 374–627 (IKIGVRIGKG…EQCLERLESI (254 aa)) is the Protein kinase domain. Residues 380-388 (IGKGNYGEV) and K401 contribute to the ATP site. The active-site Proton acceptor is D497.

Belongs to the protein kinase superfamily. TKL Ser/Thr protein kinase family.

Its subcellular location is the membrane. The catalysed reaction is L-seryl-[protein] + ATP = O-phospho-L-seryl-[protein] + ADP + H(+). The enzyme catalyses L-threonyl-[protein] + ATP = O-phospho-L-threonyl-[protein] + ADP + H(+). In Dictyostelium discoideum (Social amoeba), this protein is Probable serine/threonine-protein kinase drkA (drkA).